The sequence spans 104 residues: Small ribosomal subunit protein bS18 (104 aa).

Residues 1 to 14 (MMNNEHDNFQKEVE) are compositionally biased toward basic and acidic residues. Residues 1–25 (MMNNEHDNFQKEVETTTETTFNREE) form a disordered region.

Belongs to the bacterial ribosomal protein bS18 family. In terms of assembly, part of the 30S ribosomal subunit. Forms a tight heterodimer with protein bS6.

Binds as a heterodimer with protein bS6 to the central domain of the 16S rRNA, where it helps stabilize the platform of the 30S subunit. This is Small ribosomal subunit protein bS18 from Mycoplasma pneumoniae (strain ATCC 29342 / M129 / Subtype 1) (Mycoplasmoides pneumoniae).